The chain runs to 598 residues: Glutamine--fructose-6-phosphate aminotransferase [isomerizing] (598 aa).

The Nucleophile; for GATase activity role is filled by C2. The 218-residue stretch at 2–219 (CGIIGYIGPR…DGEYGIVSKD (218 aa)) folds into the Glutamine amidotransferase type-2 domain. SIS domains are found at residues 280–420 (VAEL…LVGI) and 449–588 (IAVK…PDRP). The For Fru-6P isomerization activity role is filled by K593.

As to quaternary structure, homodimer.

Its subcellular location is the cytoplasm. The catalysed reaction is D-fructose 6-phosphate + L-glutamine = D-glucosamine 6-phosphate + L-glutamate. Its function is as follows. Catalyzes the first step in hexosamine metabolism, converting fructose-6P into glucosamine-6P using glutamine as a nitrogen source. The chain is Glutamine--fructose-6-phosphate aminotransferase [isomerizing] from Pyrococcus horikoshii (strain ATCC 700860 / DSM 12428 / JCM 9974 / NBRC 100139 / OT-3).